The sequence spans 405 residues: MCSRVWFITDRRISQEYPQIQILRALKERCVEDDVEFRYLLMDEIVLTITDGQLGLRVGQEIVTSYPQVAVVRVPTPWVQSDSDITVLRHLEKMGCRLVNRPQAILNCVNKFWTFQELAGHGVPLPDTYSYGGHDNFRKMIDEAEPLGYPVVVKNARGHRGKAVFLARDKHHLSDLCHLIRHEAPYLFQEYVKESHGRDVRVVLVGGRVIGSMLRCSTDGRMQSNCSLGGVGMMCPLSEQGKQLAVQVCNILGMDVCGIDLLQKNDGSFVVCEANANVGFIAFDQACGMDVAGIVADFVLSLLPSRLSRKMSLLSVVSSTSETSSEPEVCIPTEVIIPSEVCIPNEICPLGTTCPIPDAMSTMSTSSTSSESEADLTETGPTPVGANPAYNINSLLASEMKLLTE.

An ATP-grasp domain is found at 115–300 (FQELAGHGVP…VAGIVADFVL (186 aa)). Residues lysine 154, 189 to 199 (QEYVKESHGRD), and arginine 215 each bind ATP. Aspartate 260, glutamate 273, and asparagine 275 together coordinate Mg(2+). Positions 260, 273, and 275 each coordinate Mn(2+). The interval 359–387 (AMSTMSTSSTSSESEADLTETGPTPVGAN) is disordered. The segment covering 360-371 (MSTMSTSSTSSE) has biased composition (low complexity).

Belongs to the RimK family. It depends on Mg(2+) as a cofactor. Requires Mn(2+) as cofactor.

Its subcellular location is the cytoplasm. The catalysed reaction is citrate + L-glutamate + ATP = beta-citrylglutamate + ADP + phosphate + H(+). It catalyses the reaction N-acetyl-L-aspartate + L-glutamate + ATP = N-acetyl-L-aspartyl-L-glutamate + ADP + phosphate + H(+). In terms of biological role, catalyzes the synthesis of beta-citryl-L-glutamate and N-acetyl-L-aspartyl-L-glutamate. Beta-citryl-L-glutamate is synthesized more efficiently than N-acetyl-L-aspartyl-L-glutamate. This is Beta-citrylglutamate synthase B (rimklb) from Danio rerio (Zebrafish).